The sequence spans 430 residues: Hemagglutinin-esterase (430 aa).

Positions 1–27 (MLRMRVRPPSAIPVFLIFVLLPFVLTS) are cleaved as a signal peptide. Residues 16–133 (LIFVLLPFVL…GSFGWVSNKV (118 aa)) form an esterase domain first part region. Residues 28–404 (KPITPHYGPG…ENVDVTSSAY (377 aa)) lie on the Virion surface side of the membrane. Residue Ser-49 is the Nucleophile of the active site. A disulfide bridge connects residues Cys-53 and Cys-69. N-linked (GlcNAc...) asparagine; by host glycosylation is found at Asn-88, Asn-117, Asn-159, Asn-165, Asn-247, Asn-268, and Asn-289. Disulfide bonds link Cys-120-Cys-168, Cys-207-Cys-284, and Cys-215-Cys-257. The interval 134–274 (GFYSKLYSMA…GVYNATTFGK (141 aa)) is receptor binding. An esterase domain second part region spans residues 275–390 (FLIYPTKSYC…SCPQYYKLFE (116 aa)). Cys-315 and Cys-320 are disulfide-bonded. A glycan (N-linked (GlcNAc...) asparagine; by host) is linked at Asn-324. Catalysis depends on charge relay system residues Asp-336 and His-339. Asn-354 carries an N-linked (GlcNAc...) asparagine; by host glycan. Residues Cys-357 and Cys-382 are joined by a disulfide bond. Residues 405–425 (FVATWVLLVLVIILIFILISF) traverse the membrane as a helical segment. Residues 426 to 430 (CLSSY) are Intravirion-facing.

This sequence belongs to the influenza type C/coronaviruses hemagglutinin-esterase family. In terms of processing, N-glycosylated.

It is found in the virion membrane. The protein resides in the host cell membrane. It carries out the reaction N-acetyl-9-O-acetylneuraminate + H2O = N-acetylneuraminate + acetate + H(+). The enzyme catalyses N-acetyl-4-O-acetylneuraminate + H2O = N-acetylneuraminate + acetate + H(+). Functionally, structural protein that makes short spikes at the surface of the virus. Contains receptor binding and receptor-destroying activities. Mediates de-O-acetylation of N-acetyl-9-O-acetylneuraminic acid, which is probably the receptor determinant recognized by the virus on the surface of erythrocytes and susceptible cells. This receptor-destroying activity is important for virus release as it probably helps preventing self-aggregation and ensures the efficient spread of the progeny virus from cell to cell. May serve as a secondary viral attachment protein for initiating infection, the spike protein being the major one. Seems to be a 'luxury' protein that is not absolutely necessary for virus infection in culture. However, its presence in the virus may alter its pathogenicity. May become a target for both the humoral and the cellular branches of the immune system. This Porcine torovirus (strain P10) (PoTV) protein is Hemagglutinin-esterase (HE).